A 451-amino-acid polypeptide reads, in one-letter code: POU domain, class 3, transcription factor 1 (451 aa).

Disordered regions lie at residues 1–21 (MATT…GTGP), 69–114 (AHPQ…GFHA), 134–154 (AHHL…HQPQ), 186–253 (GLHH…PSSD), and 395–451 (KRMT…GSVQ). 3 stretches are compositionally biased toward gly residues: residues 11–20 (GPGGGAGGTG), 76–85 (TGGGGGGDWA), and 95–112 (AGGG…GGGF). Positions 134 to 145 (AHHLGPAMSPSP) are enriched in low complexity. The segment covering 190–199 (ALHEDGHEAQ) has biased composition (basic and acidic residues). Low complexity predominate over residues 220–232 (AGGLHAAAAHLHP). Positions 247 to 321 (EDAPSSDDLE…LLNKWLEETD (75 aa)) constitute a POU-specific domain. Positions 339 to 398 (KRKKRTSIEVGVKGALESHFLKCPKPSAHEITGLADSLQLEKEVVRVWFCNRRQKEKRMT) form a DNA-binding region, homeobox. Positions 427–436 (PSAPPPPPPA) are enriched in pro residues.

The protein belongs to the POU transcription factor family. Class-3 subfamily. In terms of tissue distribution, neural tissues and testis.

It localises to the nucleus. Transcription factor that binds to the octamer motif (5'-ATTTGCAT-3'). Acts as a transcriptional activator when binding cooperatively with SOX4, SOX11, or SOX12 to gene promoters. Acts as a transcriptional repressor of myelin-specific genes. This is POU domain, class 3, transcription factor 1 (Pou3f1) from Rattus norvegicus (Rat).